Here is a 135-residue protein sequence, read N- to C-terminus: Succinate dehydrogenase assembly factor 3, mitochondrial (135 aa).

Positions 73–101 (KENSNNNDNYNNNNNDNNNDNNNFINIGQ) are disordered. The span at 75-95 (NSNNNDNYNNNNNDNNNDNNN) shows a compositional bias: low complexity.

It belongs to the complex I LYR family. SDHAF3 subfamily. In terms of assembly, interacts with the iron-sulfur protein subunit within the SDH catalytic dimer.

It is found in the mitochondrion matrix. In terms of biological role, plays an essential role in the assembly of succinate dehydrogenase (SDH), an enzyme complex (also referred to as respiratory complex II) that is a component of both the tricarboxylic acid (TCA) cycle and the mitochondrial electron transport chain, and which couples the oxidation of succinate to fumarate with the reduction of ubiquinone (coenzyme Q) to ubiquinol. Promotes maturation of the iron-sulfur protein subunit of the SDH catalytic dimer, protecting it from the deleterious effects of oxidants. May act together with SDHAF1. In Dictyostelium discoideum (Social amoeba), this protein is Succinate dehydrogenase assembly factor 3, mitochondrial (acn9).